We begin with the raw amino-acid sequence, 173 residues long: Putative 4-hydroxy-4-methyl-2-oxoglutarate aldolase (173 aa).

Substrate-binding positions include 89–92 and Arg111; that span reads GGNL. Residue Asp112 coordinates a divalent metal cation.

Belongs to the class II aldolase/RraA-like family. In terms of assembly, homotrimer. It depends on a divalent metal cation as a cofactor.

The enzyme catalyses 4-hydroxy-4-methyl-2-oxoglutarate = 2 pyruvate. It catalyses the reaction oxaloacetate + H(+) = pyruvate + CO2. In terms of biological role, catalyzes the aldol cleavage of 4-hydroxy-4-methyl-2-oxoglutarate (HMG) into 2 molecules of pyruvate. Also contains a secondary oxaloacetate (OAA) decarboxylase activity due to the common pyruvate enolate transition state formed following C-C bond cleavage in the retro-aldol and decarboxylation reactions. This chain is Putative 4-hydroxy-4-methyl-2-oxoglutarate aldolase, found in Albidiferax ferrireducens (strain ATCC BAA-621 / DSM 15236 / T118) (Rhodoferax ferrireducens).